Consider the following 350-residue polypeptide: MEDETLEDGPEEEEEDEEEGTAEETNQDVTERDEEEEAEKDEEEDKEEEEEAEKEEPPPHMPLSEEMLRDGLSLLCKTGNGLAHAYVKLEVKERELTDISVLQSFIHLRYVDLSQNSLQDLSPLGALTHLLSLRADHNQLVSVSGLGELPYLQVASFAQNRIKSLQGFGHPRLETLNLIGNELRDLEGLECSNLSSLHTLELRSNQLLSTAGLNLPSLRELYLGQNNISRLEGLEALVNLTTLHLRDNQLESLDGFSEHLQALQYLNLRSNMVAKLQEVQKLYCLPRLRALVLRENPCEEEEGYRMETLIALPQLERLDKDFFEEEEKREAAETKKAREEEMAEPGEKGN.

Residues 1-54 are compositionally biased toward acidic residues; the sequence is MEDETLEDGPEEEEEDEEEGTAEETNQDVTERDEEEEAEKDEEEDKEEEEEAEK. The interval 1–64 is disordered; the sequence is MEDETLEDGP…EEPPPHMPLS (64 aa). 8 LRR repeats span residues 107–128, 129–150, 151–171, 172–193, 196–216, 217–238, 239–260, and 262–283; these read HLRY…GALT, HLLS…GELP, YLQV…FGHP, RLET…ECSN, SLHT…LNLP, SLRE…EALV, NLTT…SEHL, and ALQY…QKLY. The LRRCT domain occupies 296–334; it reads NPCEEEEGYRMETLIALPQLERLDKDFFEEEEKREAAET. Positions 314–344 form a coiled coil; that stretch reads QLERLDKDFFEEEEKREAAETKKAREEEMAE. The segment at 325 to 350 is disordered; sequence EEEKREAAETKKAREEEMAEPGEKGN.

Its subcellular location is the cytoplasm. It localises to the cytoskeleton. The protein resides in the flagellum axoneme. This chain is Leucine-rich repeat-containing protein 23 (lrrc23), found in Xenopus tropicalis (Western clawed frog).